A 752-amino-acid chain; its full sequence is Microtubule-associated protein tau (752 aa).

The tract at residues 1–567 is disordered; it reads MAEPRQEFDT…PVPMPDLKNV (567 aa). Alanine 2 bears the N-acetylalanine mark. The residue at position 18 (tyrosine 18) is a Phosphotyrosine. Lysine 33 participates in a covalent cross-link: Glycyl lysine isopeptide (Lys-Gly) (interchain with G-Cter in ubiquitin). Phosphoserine is present on residues serine 35 and serine 50. The span at 50–60 shows a compositional bias: polar residues; that stretch reads SETSDAKSTPT. 3 positions are modified to phosphothreonine: threonine 58, threonine 60, and threonine 100. The segment covering 142-151 has biased composition (polar residues); the sequence is SDWTHQQVPS. Residues 173–182 show a composition bias toward basic and acidic residues; the sequence is RPEDVERSHP. 2 positions are modified to phosphoserine: serine 191 and serine 204. Residues 192–204 are compositionally biased toward basic and acidic residues; the sequence is PQKEAWGKDRLGS. A compositionally biased stretch (acidic residues) spans 205 to 218; it reads EEEVDEDITMDESS. Residues 219-229 show a composition bias toward low complexity; it reads QESPPSQASLA. Positions 233 to 252 are enriched in polar residues; that stretch reads ATPQARSVSASGVSGETTSI. 2 stretches are compositionally biased toward basic and acidic residues: residues 289–313 and 374–385; these read EEGH…KEQD and SKDRTGNDEKKA. 2 stretches are compositionally biased toward polar residues: residues 387-400 and 432-446; these read TSTP…SNRP and KYVS…SPGT. Threonine 464 carries the phosphothreonine modification. At arginine 466 the chain carries Omega-N-methylarginine. Lysine 474 is subject to N6,N6-dimethyllysine; alternate. Lysine 474 bears the N6-acetyllysine; alternate mark. Phosphothreonine occurs at positions 480, 486, and 487. Serine 489 carries the post-translational modification Phosphoserine. Threonine 492 carries the phosphothreonine modification. Serine 496, serine 502, and serine 506 each carry phosphoserine. A compositionally biased stretch (low complexity) spans 498 to 525; that stretch reads EPPKSGERSGYSSPGSPGTPGSRSRTPS. A Phosphotyrosine modification is found at tyrosine 508. A phosphoserine mark is found at serine 509 and serine 510. At serine 513 the chain carries Phosphoserine; by CK1, PDPK1 and TTBK1. Phosphothreonine is present on residues threonine 516 and threonine 523. Serine 525 is modified (phosphoserine). A Phosphothreonine modification is found at threonine 528. Lysine 536 bears the N6-acetyllysine mark. A Phosphothreonine modification is found at threonine 542. Phosphoserine occurs at positions 546 and 548. Tau/MAP repeat units lie at residues 555 to 585, 586 to 616, 617 to 647, and 648 to 679; these read QTAP…GGGK, VQII…GGGS, VHIV…GGGQ, and VEVK…GGGN. Lysine 565 participates in a covalent cross-link: Glycyl lysine isopeptide (Lys-Gly) (interchain with G-Cter in ubiquitin). Lysine 570 bears the N6-acetyllysine; alternate mark. Lysine 570 is subject to N6-methyllysine; alternate. Residue lysine 570 forms a Glycyl lysine isopeptide (Lys-Gly) (interchain with G-Cter in ubiquitin); alternate linkage. Serine 573 bears the Phosphoserine mark. Residue lysine 578 forms a Glycyl lysine isopeptide (Lys-Gly) (interchain with G-Cter in ubiquitin) linkage. N6-acetyllysine; alternate is present on lysine 592. A Glycyl lysine isopeptide (Lys-Gly) (interchain with G-Cter in ubiquitin); alternate cross-link involves residue lysine 592. 2 positions are modified to phosphoserine: serine 596 and serine 600. Lysine 601 carries the post-translational modification N6-acetyllysine. Cysteine 602 and cysteine 633 form a disulfide bridge. At serine 604 the chain carries Phosphoserine. Lysine 609 is modified (N6-acetyllysine; alternate). Lysine 609 participates in a covalent cross-link: Glycyl lysine isopeptide (Lys-Gly) (interchain with G-Cter in ubiquitin); alternate. At serine 616 the chain carries Phosphoserine. Lysine 622 is subject to N6,N6-dimethyllysine; alternate. N6-acetyllysine; alternate occurs at positions 622, 628, and 632. Glycyl lysine isopeptide (Lys-Gly) (interchain with G-Cter in ubiquitin); alternate cross-links involve residues lysine 622, lysine 628, and lysine 632. The residue at position 635 (serine 635) is a Phosphoserine. 3 positions are modified to N6-acetyllysine; alternate: lysine 642, lysine 654, and lysine 658. Glycyl lysine isopeptide (Lys-Gly) (interchain with G-Cter in ubiquitin); alternate cross-links involve residues lysine 642, lysine 654, and lysine 658. The residue at position 660 (arginine 660) is an Omega-N-methylarginine. Serine 663 is subject to Phosphoserine. Lysine 664 is covalently cross-linked (Glycyl lysine isopeptide (Lys-Gly) (interchain with G-Cter in ubiquitin)). Residue serine 667 is modified to Phosphoserine. Lysine 680 carries the post-translational modification N6-acetyllysine; alternate. Lysine 680 is covalently cross-linked (Glycyl lysine isopeptide (Lys-Gly) (interchain with G-Cter in ubiquitin); alternate). Lysine 686 is covalently cross-linked (Glycyl lysine isopeptide (Lys-Gly) (interchain with G-Cter in ubiquitin)). The residue at position 696 (lysine 696) is an N6-acetyllysine; alternate. A Glycyl lysine isopeptide (Lys-Gly) (interchain with G-Cter in ubiquitin); alternate cross-link involves residue lysine 696. Position 705 is a phosphotyrosine (tyrosine 705). A Phosphoserine; by CK1 and PDPK1 modification is found at serine 707. Residue serine 711 is modified to Phosphoserine. Threonine 714 carries the phosphothreonine modification. Serine 715 is modified (phosphoserine; by CK1 and PDPK1). 3 positions are modified to phosphoserine: serine 720, serine 727, and serine 733. A Phosphothreonine modification is found at threonine 738.

In terms of assembly, interacts with MARK1, MARK2, MARK3 and MARK4. Interacts with SQSTM1 when polyubiquitinated. Interacts with PSMC2 through SQSTM1. Interacts with FKBP4. Binds to CSNK1D. Interacts with SGK1. Interacts with EPM2A; the interaction dephosphorylates MAPT at Ser-388. Interacts with PIN1. Interacts with LRRK2. Interacts with LRP1, leading to endocytosis; this interaction is reduced in the presence of LRPAP1/RAP. In terms of processing, polyubiquitinated. Requires functional TRAF6 and may provoke SQSTM1-dependent degradation by the proteasome. Post-translationally, phosphorylated at various serine and threonine residues in S-P or T-P motifs by proline-directed protein kinases (PDPK1, CDK1, CDK5, GSK3, MAPK) (a few sites per protein in interphase, more in mitosis), and at serine residues in K-X-G-S motifs by MAP/microtubule affinity-regulating kinase (MARK1, MARK2, MARK3, MARK4), causing detachment from microtubules, and their disassembly. Fetal Tau is much more phosphorylated than adult Tau. Phosphorylation at Ser-573 by BRSK1 and BRSK2 in neurons affects ability to bind microtubules and plays a role in neuron polarization. Phosphorylated by PHK. Dephosphorylation at several serine and threonine residues by the serine/threonine phosphatase PPP5C. Phosphorylation at Ser-204 by SGK1 mediates microtubule depolymerization and neurite formation in hippocampal neurons. Expressed in neurons. The larger forms (isoform tau-A and isoform tau-B) are preferentially expressed in the peripheral nervous system while the other are expressed in the central nervous system. Low amounts of the larger forms are also found in limited areas of the CNS.

The protein localises to the cytoplasm. The protein resides in the cytosol. It is found in the cell membrane. It localises to the cytoskeleton. Its subcellular location is the cell projection. The protein localises to the axon. The protein resides in the dendrite. It is found in the secreted. Functionally, promotes microtubule assembly and stability, and might be involved in the establishment and maintenance of neuronal polarity. The C-terminus binds axonal microtubules while the N-terminus binds neural plasma membrane components, suggesting that tau functions as a linker protein between both. Axonal polarity is predetermined by tau localization (in the neuronal cell) in the domain of the cell body defined by the centrosome. The short isoforms allow plasticity of the cytoskeleton whereas the longer isoforms may preferentially play a role in its stabilization. In Rattus norvegicus (Rat), this protein is Microtubule-associated protein tau.